A 367-amino-acid polypeptide reads, in one-letter code: Cyclin-dependent kinase 5 activator 2 (367 aa).

Residues methionine 1–serine 11 show a composition bias toward polar residues. Disordered regions lie at residues methionine 1–arginine 56, alanine 72–glutamine 98, alanine 131–arginine 175, and glycine 329–arginine 367. Glycine 2 carries the N-myristoyl glycine lipid modification. Over residues alanine 74–threonine 84 the composition is skewed to basic residues. Threonine 84 carries the phosphothreonine modification. Over residues alanine 131–proline 148 the composition is skewed to low complexity. The span at lysine 154–glycine 171 shows a compositional bias: pro residues. Positions glycine 342–glycine 357 are enriched in low complexity.

Belongs to the cyclin-dependent kinase 5 activator family. As to quaternary structure, heterodimer of a catalytic subunit and a regulatory subunit. In terms of processing, myristoylated. The Gly-2-Ala mutant is absent of the cell periphery, suggesting that a proper myristoylation signal is essential for the proper distribution of CDK5R2 (p39). As to expression, brain and neuron specific.

It localises to the cell membrane. In terms of biological role, activator of CDK5/TPKII. The sequence is that of Cyclin-dependent kinase 5 activator 2 (CDK5R2) from Homo sapiens (Human).